Reading from the N-terminus, the 2489-residue chain is Protein YPR117W (2489 aa).

2 helical membrane-spanning segments follow: residues 19–39 and 128–148; these read FMLF…WILM and VLSI…LALT. N-linked (GlcNAc...) asparagine glycosylation is found at N191, N210, N311, N452, N468, N605, N638, N663, N698, N789, N835, N981, N1255, N1404, and N1476. The stretch at 1610 to 1676 forms a coiled coil; it reads LTQEKLATER…RLHTVNTILS (67 aa). The disordered stretch occupies residues 1685–1704; sequence PGGNTDGDSSSSLSDTDVNL. Over residues 1690–1704 the composition is skewed to low complexity; that stretch reads DGDSSSSLSDTDVNL. N-linked (GlcNAc...) asparagine glycosylation is found at N1978 and N2189. Phosphoserine is present on residues S2254 and S2278. N-linked (GlcNAc...) asparagine glycosylation is present at N2279. Residues 2451–2471 are compositionally biased toward polar residues; that stretch reads SSTHSSDIRSINSDETYNEND. Positions 2451-2489 are disordered; the sequence is SSTHSSDIRSINSDETYNENDGNGVKPFYPVTSEFSKNK.

The protein resides in the cell membrane. The protein localises to the endoplasmic reticulum membrane. Its subcellular location is the mitochondrion membrane. In terms of biological role, tube-forming lipid transport protein which may bind to phosphatidylinositols and may affect phosphatidylinositol-4,5-bisphosphate (PtdIns-4,5-P2) distribution. In Saccharomyces cerevisiae (strain ATCC 204508 / S288c) (Baker's yeast), this protein is Protein YPR117W.